A 259-amino-acid polypeptide reads, in one-letter code: Probable dihydroorotate dehydrogenase B (NAD(+)), electron transfer subunit (259 aa).

The 89-residue stretch at 1–89 (MLPLNVTITQ…RGPFGKGFTL (89 aa)) folds into the FAD-binding FR-type domain. [2Fe-2S] cluster is bound by residues Cys211, Cys216, Cys219, and Cys229.

The protein belongs to the PyrK family. In terms of assembly, heterotetramer of 2 PyrK and 2 PyrD type B subunits. It depends on [2Fe-2S] cluster as a cofactor. FAD is required as a cofactor.

It functions in the pathway pyrimidine metabolism; UMP biosynthesis via de novo pathway; orotate from (S)-dihydroorotate (NAD(+) route): step 1/1. In terms of biological role, responsible for channeling the electrons from the oxidation of dihydroorotate from the FMN redox center in the PyrD type B subunit to the ultimate electron acceptor NAD(+). The chain is Probable dihydroorotate dehydrogenase B (NAD(+)), electron transfer subunit from Methanosarcina acetivorans (strain ATCC 35395 / DSM 2834 / JCM 12185 / C2A).